A 529-amino-acid polypeptide reads, in one-letter code: MQQHRPVRRALLSVSDKAGILEFAQALSQRGVELLSTGGTARLLADAGLPVTEVSDYTGFPEMMDGRVKTLHPKVHGGILGRRGQDDAIMTEHGISPIDMVVVNLYPFAQTVSRADCSLEDAVENIDIGGPTMVRSAAKNHKDVAIVVKSSDYQAIIAELDANECSLTLATRFDLAIKAFEHTAAYDSMIANYFGSMVPAYHGETTEPAGRFPRTLNLNFIKKQDMRYGENSHQQAAFYIEEHVGEASVATAQQVQGKALSYNNIADTDAALECVKEFDQPACVIVKHANPCGVATGSAIIEAYERAYQTDPTSAFGGIIAFNRELDEATARAIISRQFVEVIIAPSASDAALKITAAKQNVRVLTCGQWQQRQTGLDFKRVNGGLLVQDRDLGMVSDSQLRVVSKRQPSEQELRDALFCWKVAKFVKSNAIVYARDNMTIGIGAGQMSRVYSAKIAAIKAADEGLEVTGSSMASDAFFPFRDGIDAAAAVGITCVIQPGGSIRDDEVIAAADEHGIAMIFTGMRHFRH.

An MGS-like domain is found at 1-148 (MQQHRPVRRA…KNHKDVAIVV (148 aa)).

The protein belongs to the PurH family.

It carries out the reaction (6R)-10-formyltetrahydrofolate + 5-amino-1-(5-phospho-beta-D-ribosyl)imidazole-4-carboxamide = 5-formamido-1-(5-phospho-D-ribosyl)imidazole-4-carboxamide + (6S)-5,6,7,8-tetrahydrofolate. It catalyses the reaction IMP + H2O = 5-formamido-1-(5-phospho-D-ribosyl)imidazole-4-carboxamide. It functions in the pathway purine metabolism; IMP biosynthesis via de novo pathway; 5-formamido-1-(5-phospho-D-ribosyl)imidazole-4-carboxamide from 5-amino-1-(5-phospho-D-ribosyl)imidazole-4-carboxamide (10-formyl THF route): step 1/1. Its pathway is purine metabolism; IMP biosynthesis via de novo pathway; IMP from 5-formamido-1-(5-phospho-D-ribosyl)imidazole-4-carboxamide: step 1/1. In Erwinia tasmaniensis (strain DSM 17950 / CFBP 7177 / CIP 109463 / NCPPB 4357 / Et1/99), this protein is Bifunctional purine biosynthesis protein PurH.